Here is a 161-residue protein sequence, read N- to C-terminus: Phosphopantetheine adenylyltransferase (161 aa).

Ser-9 serves as a coordination point for substrate. Residues Ser-9–Phe-10 and His-17 each bind ATP. Residues Lys-41, Leu-73, and Arg-87 each contribute to the substrate site. Residues Gly-88–Arg-90, Glu-98, and Tyr-123–Ser-129 each bind ATP.

The protein belongs to the bacterial CoaD family. In terms of assembly, homohexamer. Mg(2+) is required as a cofactor.

The protein localises to the cytoplasm. It carries out the reaction (R)-4'-phosphopantetheine + ATP + H(+) = 3'-dephospho-CoA + diphosphate. The protein operates within cofactor biosynthesis; coenzyme A biosynthesis; CoA from (R)-pantothenate: step 4/5. Its function is as follows. Reversibly transfers an adenylyl group from ATP to 4'-phosphopantetheine, yielding dephospho-CoA (dPCoA) and pyrophosphate. This Syntrophomonas wolfei subsp. wolfei (strain DSM 2245B / Goettingen) protein is Phosphopantetheine adenylyltransferase.